The sequence spans 773 residues: Endonuclease MutS2 (773 aa).

334–341 is a binding site for ATP; the sequence is GANAGGKT. The Smr domain occupies 698 to 773; the sequence is VDLRGMRADV…GDGMTMVTLK (76 aa).

Belongs to the DNA mismatch repair MutS family. MutS2 subfamily. Homodimer. Binds to stalled ribosomes, contacting rRNA.

Endonuclease that is involved in the suppression of homologous recombination and thus may have a key role in the control of bacterial genetic diversity. Its function is as follows. Acts as a ribosome collision sensor, splitting the ribosome into its 2 subunits. Detects stalled/collided 70S ribosomes which it binds and splits by an ATP-hydrolysis driven conformational change. Acts upstream of the ribosome quality control system (RQC), a ribosome-associated complex that mediates the extraction of incompletely synthesized nascent chains from stalled ribosomes and their subsequent degradation. Probably generates substrates for RQC. This Solidesulfovibrio magneticus (strain ATCC 700980 / DSM 13731 / RS-1) (Desulfovibrio magneticus) protein is Endonuclease MutS2.